We begin with the raw amino-acid sequence, 35 residues long: Tamulustoxin (35 aa).

Intrachain disulfides connect Cys2-Cys22, Cys7-Cys31, and Cys11-Cys33.

As to expression, expressed by the venom gland.

It localises to the secreted. In terms of biological role, blocks Kv1.6/KCNA6 potassium channels. The chain is Tamulustoxin from Hottentotta tamulus (Eastern Indian scorpion).